Reading from the N-terminus, the 491-residue chain is Serralysin (491 aa).

Residues 1-16 constitute a propeptide that is removed on maturation; sequence MGSFLLKKAVGLSNIS. Zn(2+) is bound at residue His186. Residue Glu187 is part of the active site. Zn(2+)-binding residues include His190, His196, and Tyr226. Ca(2+) contacts are provided by Arg263, Gly265, Asp295, Gly297, Gly298, Asp300, Thr337, Glu339, Gly344, Gly346, Asp348, Asn353, Ala355, Asn357, Gly361, Gly362, Gly364, Asp366, Gly370, Gly373, Asp384, Gly388, Gly389, Gly391, Asp402, Asp409, and Asp419. Hemolysin-type calcium-binding repeat units lie at residues 342–359, 360–377, and 378–395; these read IGGFGNDIIHGNDADNTL, IGGEGDDIIYGHSGNNTI, and YGGRGQDTLHGGTGSNTF.

It belongs to the peptidase M10B family. Ca(2+) serves as cofactor. Zn(2+) is required as a cofactor.

It localises to the secreted. The catalysed reaction is Preferential cleavage of bonds with hydrophobic residues in P1'.. Its activity is regulated as follows. Ca(2+) increases protease activity. Functionally, one of the virulence factors produced during swarmer cell differentiation of the bacteria, which seems to be associated with pathogenesis. The protease activity is limited to IgA1, IgA2, as well as IgG degradation. The chain is Serralysin (zapA) from Proteus mirabilis.